The following is a 101-amino-acid chain: Protein translation factor SUI1 homolog (101 aa).

This sequence belongs to the SUI1 family.

The sequence is that of Protein translation factor SUI1 homolog from Methanoregula boonei (strain DSM 21154 / JCM 14090 / 6A8).